We begin with the raw amino-acid sequence, 145 residues long: 3-hydroxyacyl-[acyl-carrier-protein] dehydratase FabZ (145 aa).

Residue His-51 is part of the active site.

Belongs to the thioester dehydratase family. FabZ subfamily.

It localises to the cytoplasm. The catalysed reaction is a (3R)-hydroxyacyl-[ACP] = a (2E)-enoyl-[ACP] + H2O. Its function is as follows. Involved in unsaturated fatty acids biosynthesis. Catalyzes the dehydration of short chain beta-hydroxyacyl-ACPs and long chain saturated and unsaturated beta-hydroxyacyl-ACPs. In Staphylococcus saprophyticus subsp. saprophyticus (strain ATCC 15305 / DSM 20229 / NCIMB 8711 / NCTC 7292 / S-41), this protein is 3-hydroxyacyl-[acyl-carrier-protein] dehydratase FabZ.